A 329-amino-acid polypeptide reads, in one-letter code: Myoblast determination protein 1 homolog (329 aa).

The 52-residue stretch at 160–211 (DRRKAATMRERRRLRKVNEAFEVVKQRTCPNPNQRLPKVEILRSAIDYINTL) folds into the bHLH domain. Residues 256–279 (NPDGPNVYDDEDLSDTDEDRDHHH) form a disordered region. The span at 263-273 (YDDEDLSDTDE) shows a compositional bias: acidic residues.

In terms of assembly, efficient DNA binding requires dimerization with another bHLH protein. As to expression, body wall muscle cells; in clonal muscle precursors, in a set of early embryonic blastomeres (the ms-granddaughters), and in six glial-like cells called GLRS.

It localises to the nucleus. Functionally, accumulation defines the body wall muscle cell fate during embryogenesis. The protein is Myoblast determination protein 1 homolog (hlh-1) of Caenorhabditis briggsae.